A 98-amino-acid chain; its full sequence is NADH-ubiquinone oxidoreductase chain 4L (98 aa).

Transmembrane regions (helical) follow at residues 1–21 (MPII…GMLV), 29–49 (SLLC…LMAL), and 61–81 (IALL…LVSI).

This sequence belongs to the complex I subunit 4L family. In terms of assembly, core subunit of respiratory chain NADH dehydrogenase (Complex I) which is composed of 45 different subunits.

The protein resides in the mitochondrion inner membrane. The catalysed reaction is a ubiquinone + NADH + 5 H(+)(in) = a ubiquinol + NAD(+) + 4 H(+)(out). Its function is as follows. Core subunit of the mitochondrial membrane respiratory chain NADH dehydrogenase (Complex I) which catalyzes electron transfer from NADH through the respiratory chain, using ubiquinone as an electron acceptor. Part of the enzyme membrane arm which is embedded in the lipid bilayer and involved in proton translocation. The chain is NADH-ubiquinone oxidoreductase chain 4L (MT-ND4L) from Piliocolobus badius (Western red colobus).